A 523-amino-acid polypeptide reads, in one-letter code: Signal peptide peptidase-like 2A (523 aa).

The first 25 residues, 1 to 25 (MGLLHSLHAPAAALLWSCLLGLAAA), serve as a signal peptide directing secretion. At 26–175 (QEAILHASTN…PSWPNFDYTL (150 aa)) the chain is on the lumenal side. N51, N61, N69, N119, N129, and N135 each carry an N-linked (GlcNAc...) asparagine glycan. The PA domain maps to 70–155 (LTGTALCHLS…KDFKDMKETL (86 aa)). A helical transmembrane segment spans residues 176–196 (VVIFVIAVFTVALGGYWSGLI). The Cytoplasmic segment spans residues 197–224 (ELENMKSVEDAEDRETRKKKDDYLTFSP). A helical transmembrane segment spans residues 225–245 (LTVVVFVVICCIMIVLLYFFY). Over 246–247 (RW) the chain is Lumenal. A helical transmembrane segment spans residues 248–268 (LVYVMIAIFCIASSMSLYNCL). The Cytoplasmic segment spans residues 269-288 (SALIHRMPCGQCTILCCGKN). Residues 289-309 (IKVSLIFLSGLCISVAVVWAV) form a helical membrane-spanning segment. The Lumenal portion of the chain corresponds to 310-315 (FRNEDR). The helical transmembrane segment at 316 to 336 (WAWILQDILGIAFCLNLIKTM) threads the bilayer. The Cytoplasmic portion of the chain corresponds to 337–344 (KLPNFMSC). The chain crosses the membrane as a helical span at residues 345–365 (VILLGLLLIYDVFFVFITPFI). The active site involves D355. Topologically, residues 366 to 403 (TKNGESIMVELAAGPFENAEKLPVVIRVPKLMGYSVMS) are lumenal. The chain crosses the membrane as a helical span at residues 404–424 (VCSVPVSVLGFGDIIVPGLLI). The active site involves D416. Residues 425–440 (AYCRRFDVQTGSSIYY) lie on the Cytoplasmic side of the membrane. A helical transmembrane segment spans residues 441–461 (ISSTIAYAVGMIITFVVLMVM). Residues 462–463 (KT) are Lumenal-facing. The helical transmembrane segment at 464–484 (GQPALLYLVPCTLITVSVVAW) threads the bilayer. A PAL motif is present at residues 466-468 (PAL). Residues 485–523 (SRKEMKKFWKGSSYQVMDHLDYSTNEENPVTTDEQIVQQ) are Cytoplasmic-facing. Residues 498-501 (YQVM) carry the YXXo lysosomal targeting motif motif.

The protein belongs to the peptidase A22B family. Interacts with ITM2B. In terms of processing, glycosylated.

Its subcellular location is the late endosome membrane. The protein localises to the lysosome membrane. The protein resides in the membrane. Functionally, intramembrane-cleaving aspartic protease (I-CLiP) that cleaves type II membrane signal peptides in the hydrophobic plane of the membrane. Functions in FASLG, ITM2B and TNF processing. Catalyzes the intramembrane cleavage of the anchored fragment of shed TNF-alpha (TNF), which promotes the release of the intracellular domain (ICD) for signaling to the nucleus. Also responsible for the intramembrane cleavage of Fas antigen ligand FASLG, which promotes the release of the intracellular FasL domain (FasL ICD). Essential for degradation of the invariant chain CD74 that plays a central role in the function of antigen-presenting cells in the immune system. Plays a role in the regulation of innate and adaptive immunity. The chain is Signal peptide peptidase-like 2A from Mus musculus (Mouse).